The following is a 148-amino-acid chain: Snaclec 3 (148 aa).

The N-terminal stretch at 1-23 is a signal peptide; sequence MGRFISVSFGLLVVFLSLSGTEA. Intrachain disulfides connect C27/C38, C55/C144, and C121/C136. The C-type lectin domain occupies 34–145; sequence YDQNCYKVFT…CSSTHNFVCK (112 aa).

Belongs to the snaclec family. In terms of assembly, heterodimer; disulfide-linked.

The protein resides in the secreted. In terms of biological role, interferes with one step of hemostasis (modulation of platelet aggregation, or coagulation cascade, for example). The protein is Snaclec 3 of Daboia siamensis (Eastern Russel's viper).